A 266-amino-acid chain; its full sequence is Killer cell lectin-like receptor 6 (266 aa).

Over 1-44 (MSEPEVTYSTVRLHKSSRLQKLVRHEETQGPREAGYRKCSVCWQ) the chain is Cytoplasmic. A helical; Signal-anchor for type II membrane protein transmembrane segment spans residues 45-66 (LIVKALGILCFLLLITVAVLAV). The Extracellular portion of the chain corresponds to 67–266 (KIFQYGQHNQ…CGKKLDKFPH (200 aa)). 2 N-linked (GlcNAc...) asparagine glycosylation sites follow: Asn87 and Asn104. One can recognise a C-type lectin domain in the interval 143 to 261 (GVKYWFCYRT…SHYCICGKKL (119 aa)). Intrachain disulfides connect Cys149–Cys154, Cys167–Cys255, Cys171–Cys257, and Cys236–Cys249.

Homodimer; disulfide-linked.

It localises to the membrane. In terms of biological role, receptor on natural killer (NK) cells for class I MHC. The sequence is that of Killer cell lectin-like receptor 6 (Klra6) from Mus musculus (Mouse).